A 467-amino-acid chain; its full sequence is MRNTIGVIGLGVMGSNIALNMASKGEQVAVYNYTRDLTDQLVQKTGGQTVKPYYELEDFVQSLEKPRKIFLMVTAGKPVDSVIDSLVPLLEEGDVIMDGGNSHYEDTERRYDSLKAKGIGYLGIGISGGEVGALKGPSIMPGGDRDVYEKAAPILTKIAAQVEGDPCCVYIGPKGAGHFVKMVHNGIEYADMQLIAEAYTFLREKLLLPIDEIADIFDTWNQGELKSYLIEITAEILRKKDERTGAPLIDVILDKTGQKGTGKWTSLQAIDNGIPSSIITESLFARYLSSLKDERTAAENVLAGPETEERPLDQNVWIDRVRQALYMGKVCAYAQGFAQYKMTSDLNGWHLPLKDIALIFRGGCIIRAQFLNLISEVYDKQPDLSNLLVAPDFAEKLKEYQSGLRKVVCEGISSGISFPCLSTALSYYDGYRTGRSNANLLQAQANYFGAHTYERTDMEGVFHTDWY.

Residues glycine 9–glycine 14, asparagine 32–threonine 34, valine 73–alanine 75, and asparagine 101 each bind NADP(+). Substrate-binding positions include asparagine 101 and serine 127 to glycine 129. Catalysis depends on lysine 181, which acts as the Proton acceptor. Residue histidine 184 to asparagine 185 coordinates substrate. Glutamate 188 functions as the Proton donor in the catalytic mechanism. 4 residues coordinate substrate: tyrosine 189, lysine 259, arginine 286, and histidine 451.

It belongs to the 6-phosphogluconate dehydrogenase family. As to quaternary structure, homodimer.

The enzyme catalyses 6-phospho-D-gluconate + NADP(+) = D-ribulose 5-phosphate + CO2 + NADPH. It participates in carbohydrate degradation; pentose phosphate pathway; D-ribulose 5-phosphate from D-glucose 6-phosphate (oxidative stage): step 3/3. Functionally, catalyzes the oxidative decarboxylation of 6-phosphogluconate to ribulose 5-phosphate and CO(2), with concomitant reduction of NADP to NADPH. This chain is 6-phosphogluconate dehydrogenase, decarboxylating (gntZ), found in Bacillus licheniformis.